Reading from the N-terminus, the 377-residue chain is Prostaglandin E synthase 2 (377 aa).

At 1-65 the chain is on the lumenal side; that stretch reads MAAACTRTLG…LAAPVRGSGR (65 aa). Residues 66-83 traverse the membrane as a helical segment; it reads VLGCAFLLGGGFGLYQTI. The 78-residue stretch at 105 to 182 folds into the GST N-terminal domain; sequence LKLTLYQYKT…ALKTYISSKD (78 aa). Glutathione is bound by residues V153 and 166–167; that span reads DS. The GST C-terminal domain occupies 266-377; that stretch reads YIVREGKFGS…RMQKATQHVS (112 aa).

This sequence belongs to the GST superfamily. In terms of assembly, homodimer.

Its subcellular location is the golgi apparatus membrane. It carries out the reaction prostaglandin H2 = prostaglandin E2. It catalyses the reaction prostaglandin H2 = (12S)-hydroxy-(5Z,8E,10E)-heptadecatrienoate + malonaldehyde. It functions in the pathway lipid metabolism; prostaglandin biosynthesis. Isomerase activity is increased by sulfhydril compounds. Dithiothreitol (DTT) is most effective, followed by glutathione (GSH) and 2-mercaptoethanol. Its function is as follows. Isomerase that catalyzes the conversion of PGH2 into the more stable prostaglandin E2 (PGE2) (in vitro). The biological function and the GSH-dependent property of PTGES2 is still under debate. In vivo, PTGES2 could form a complex with GSH and heme and would not participate in PGE2 synthesis but would catalyze the degradation of prostaglandin E2 H2 (PGH2) to 12(S)-hydroxy-5(Z),8(E),10(E)-heptadecatrienoic acid (HHT) and malondialdehyde (MDA). This Danio rerio (Zebrafish) protein is Prostaglandin E synthase 2 (ptges2).